We begin with the raw amino-acid sequence, 152 residues long: Flagellar assembly factor FliW (152 aa).

Belongs to the FliW family. As to quaternary structure, interacts with translational regulator CsrA and flagellin(s).

Its subcellular location is the cytoplasm. Acts as an anti-CsrA protein, binds CsrA and prevents it from repressing translation of its target genes, one of which is flagellin. Binds to flagellin and participates in the assembly of the flagellum. The chain is Flagellar assembly factor FliW from Desulfitobacterium hafniense (strain Y51).